The primary structure comprises 183 residues: Oleosin Bn-V (183 aa).

Residues 1 to 47 (PARTHHDITTRDQYPLISRDRDQYGMIGRDQYNMSGQNYSKSRQIAK) form a polar region. 2 consecutive repeats follow at residues 11–20 (RDQYPLISRD) and 21–30 (RDQYGMIGRD). The interval 48-119 (ATTAVTAGDS…AAITVFSWIY (72 aa)) is hydrophobic. The next 2 membrane-spanning stretches (helical) occupy residues 57-77 (SLLV…IVAT) and 99-119 (TGFL…SWIY). Residues 154–183 (YGQQHTGEEHDRDRDHRTDRDRTRGTQHTT) form a disordered region. Over residues 159–177 (TGEEHDRDRDHRTDRDRTR) the composition is skewed to basic and acidic residues.

The protein belongs to the oleosin family.

Its subcellular location is the lipid droplet. It localises to the membrane. Its function is as follows. May have a structural role to stabilize the lipid body during desiccation of the seed by preventing coalescence of the oil. Probably interacts with both lipid and phospholipid moieties of lipid bodies. May also provide recognition signals for specific lipase anchorage in lipolysis during seedling growth. This chain is Oleosin Bn-V, found in Brassica napus (Rape).